The primary structure comprises 243 residues: uncharacterized protein (243 aa).

Residues 26–204 (RVGLVLDITG…ISDDELYDAL (179 aa)) form the VWFA domain. A disordered region spans residues 222 to 243 (REQEPPAEKPKKKGFFSRLFSK). Residues 231–243 (PKKKGFFSRLFSK) show a composition bias toward basic residues.

This is an uncharacterized protein from Bacillus subtilis (strain 168).